Reading from the N-terminus, the 271-residue chain is Short-chain dehydrogenase/reductase SAT3 (271 aa).

Positions 17, 40, and 67 each coordinate NADP(+). Ser153 serves as the catalytic Proton donor. NADP(+)-binding residues include Tyr168, Lys172, and Ser203. The active-site Proton acceptor is Tyr168. Lys172 serves as the catalytic Lowers pKa of active site Tyr.

Belongs to the short-chain dehydrogenases/reductases (SDR) family.

Its pathway is mycotoxin biosynthesis. In terms of biological role, short-chain dehydrogenase/reductase; part of the satratoxin SC1 cluster involved in the biosynthesis of satratoxins, trichothecene mycotoxins that are associated with human food poisonings. Satratoxins are suggested to be made by products of multiple gene clusters (SC1, SC2 and SC3) that encode 21 proteins in all, including polyketide synthases, acetyltransferases, and other enzymes expected to modify the trichothecene skeleton. SC1 encodes 10 proteins, SAT1 to SAT10. The largest are SAT8, which encodes a putative polyketide synthase (PKS) with a conventional non-reducing architecture, and SAT10, a putative protein containing four ankyrin repeats and thus may be involved in protein scaffolding. The putative short-chain reductase SAT3 may assist the PKS in some capacity. SAT6 contains a secretory lipase domain and acts probably as a trichothecene esterase. SAT5 encodes a putative acetyltransferase, and so, with SAT6, may affect endogenous protection from toxicity. The probable transcription factor SAT9 may regulate the expression of the SC1 cluster. SC2 encodes proteins SAT11 to SAT16, the largest of which encodes the putative reducing PKS SAT13. SAT11 is a cytochrome P450 monooxygenase, while SAT14 and SAT16 are probable acetyltransferases. The SC2 cluster may be regulated by the transcription factor SAT15. SC3 is a small cluster that encodes 5 proteins, SAT17 to SAT21. SAT21 is a putative MFS-type transporter which may have a role in exporting secondary metabolites. The four other proteins putatively encoded in SC3 include the taurine hydroxylase-like protein SAT17, the O-methyltransferase SAT18, the acetyltransferase SAT19, and the Cys6-type zinc finger SAT20, the latter being probably involved in regulation of SC3 expression. In Stachybotrys chartarum (strain CBS 109288 / IBT 7711) (Toxic black mold), this protein is Short-chain dehydrogenase/reductase SAT3.